A 404-amino-acid polypeptide reads, in one-letter code: Multidrug resistance protein MdtG (404 aa).

Transmembrane regions (helical) follow at residues 19-39, 56-76, 90-110, 113-133, 144-164, 171-191, 222-242, 254-274, 288-308, 317-337, and 376-396; these read LGCF…PLYV, LVFS…GGLA, LGMA…QFLI, ALLG…ATQV, TLST…GLLA, PVFF…FFFI, LFVT…ILTL, IAFI…LSAP, ILIV…FVQT, FLLG…LVYN, and AVFC…WNSL.

The protein belongs to the major facilitator superfamily. DHA1 family. MdtG (TC 2.A.1.2.20) subfamily.

It is found in the cell inner membrane. The sequence is that of Multidrug resistance protein MdtG from Salmonella dublin (strain CT_02021853).